An 875-amino-acid chain; its full sequence is Alanine--tRNA ligase (875 aa).

Zn(2+)-binding residues include H563, H567, C665, and H669.

This sequence belongs to the class-II aminoacyl-tRNA synthetase family. It depends on Zn(2+) as a cofactor.

It is found in the cytoplasm. It catalyses the reaction tRNA(Ala) + L-alanine + ATP = L-alanyl-tRNA(Ala) + AMP + diphosphate. Its function is as follows. Catalyzes the attachment of alanine to tRNA(Ala) in a two-step reaction: alanine is first activated by ATP to form Ala-AMP and then transferred to the acceptor end of tRNA(Ala). Also edits incorrectly charged Ser-tRNA(Ala) and Gly-tRNA(Ala) via its editing domain. This chain is Alanine--tRNA ligase, found in Desulfitobacterium hafniense (strain Y51).